The chain runs to 918 residues: Protein translocase subunit SecA (918 aa).

ATP contacts are provided by residues Gln-87, 105–109 (GEGKT), and Asp-500. Residues 876-918 (AGALPVAETLERDTPESWRNTPRNAPCPCGSGKKYKHCHGQAR) form a disordered region. Residues Cys-902, Cys-904, Cys-913, and His-914 each coordinate Zn(2+). The span at 908–918 (KKYKHCHGQAR) shows a compositional bias: basic residues.

It belongs to the SecA family. As to quaternary structure, monomer and homodimer. Part of the essential Sec protein translocation apparatus which comprises SecA, SecYEG and auxiliary proteins SecDF-YajC and YidC. The cofactor is Zn(2+).

It is found in the cell inner membrane. Its subcellular location is the cytoplasm. It catalyses the reaction ATP + H2O + cellular proteinSide 1 = ADP + phosphate + cellular proteinSide 2.. In terms of biological role, part of the Sec protein translocase complex. Interacts with the SecYEG preprotein conducting channel. Has a central role in coupling the hydrolysis of ATP to the transfer of proteins into and across the cell membrane, serving both as a receptor for the preprotein-SecB complex and as an ATP-driven molecular motor driving the stepwise translocation of polypeptide chains across the membrane. The sequence is that of Protein translocase subunit SecA from Rhodospirillum centenum (strain ATCC 51521 / SW).